A 220-amino-acid chain; its full sequence is Protein CREG1 (220 aa).

The first 31 residues, 1–31 (MAGLSRGSARALLAALLASTLLALLVSPARG), serve as a signal peptide directing secretion. N-linked (GlcNAc...) asparagine glycans are attached at residues Asn-160, Asn-193, and Asn-216.

Belongs to the CREG family. In terms of assembly, homodimer. Interacts with IGF2R; the interaction is dependent on glycosylation. N-glycosylated.

The protein resides in the secreted. May contribute to the transcriptional control of cell growth and differentiation. Antagonizes transcriptional activation and cellular transformation by the adenovirus E1A protein. The transcriptional control activity of cell growth requires interaction with IGF2R. This Homo sapiens (Human) protein is Protein CREG1 (CREG1).